Reading from the N-terminus, the 77-residue chain is Probable small nuclear ribonucleoprotein G (77 aa).

The Sm domain maps to 4-76; the sequence is THPPELKKYM…VVIMEPKERI (73 aa).

This sequence belongs to the snRNP Sm proteins family. In terms of assembly, core component of the spliceosomal U1, U2, U4 and U5 small nuclear ribonucleoproteins (snRNPs), the building blocks of the spliceosome.

It is found in the cytoplasm. The protein resides in the cytosol. Its subcellular location is the nucleus. Plays a role in pre-mRNA splicing as a core component of the spliceosomal U1, U2, U4 and U5 small nuclear ribonucleoproteins (snRNPs), the building blocks of the spliceosome. The sequence is that of Probable small nuclear ribonucleoprotein G (snr-7) from Caenorhabditis elegans.